Reading from the N-terminus, the 346-residue chain is [LysW]-lysine/[LysW]-ornithine hydrolase (346 aa).

His-67 contributes to the Zn(2+) binding site. Asp-69 is an active-site residue. Asp-91 contributes to the Zn(2+) binding site. Catalysis depends on Glu-121, which acts as the Proton acceptor. Residues Glu-122, Glu-145, and His-316 each coordinate Zn(2+).

The protein belongs to the peptidase M20A family. LysK subfamily. The cofactor is Zn(2+). It depends on Co(2+) as a cofactor.

It is found in the cytoplasm. The catalysed reaction is [amino-group carrier protein]-C-terminal-gamma-(L-lysyl)-L-glutamate + H2O = [amino-group carrier protein]-C-terminal-L-glutamate + L-lysine. The enzyme catalyses [amino-group carrier protein]-C-terminal-gamma-(L-ornithyl)-L-glutamate + H2O = [amino-group carrier protein]-C-terminal-L-glutamate + L-ornithine. It functions in the pathway amino-acid biosynthesis; L-lysine biosynthesis via AAA pathway; L-lysine from L-alpha-aminoadipate (Thermus route): step 5/5. It participates in amino-acid biosynthesis; L-arginine biosynthesis. Catalyzes the release of L-lysine from [LysW]-gamma-L-lysine and the release of L-ornithine from [LysW]-L-ornithine. This is [LysW]-lysine/[LysW]-ornithine hydrolase from Sulfurisphaera tokodaii (strain DSM 16993 / JCM 10545 / NBRC 100140 / 7) (Sulfolobus tokodaii).